The sequence spans 148 residues: Ubiquitin-conjugating enzyme E2 11 (148 aa).

A UBC core domain is found at 1–147; the sequence is MASKRILKEL…ARSWTQKYAM (147 aa). Residue Cys-85 is the Glycyl thioester intermediate of the active site.

It belongs to the ubiquitin-conjugating enzyme family. In terms of assembly, interacts with the E3 ubiquitin-protein ligases MBR1 and MBR2. In terms of tissue distribution, ubiquitously expressed. Mainly in petals.

The enzyme catalyses S-ubiquitinyl-[E1 ubiquitin-activating enzyme]-L-cysteine + [E2 ubiquitin-conjugating enzyme]-L-cysteine = [E1 ubiquitin-activating enzyme]-L-cysteine + S-ubiquitinyl-[E2 ubiquitin-conjugating enzyme]-L-cysteine.. The protein operates within protein modification; protein ubiquitination. Its function is as follows. Accepts the ubiquitin from the E1 complex and catalyzes its covalent attachment to other proteins. Mediates the selective degradation of short-lived and abnormal proteins. In Arabidopsis thaliana (Mouse-ear cress), this protein is Ubiquitin-conjugating enzyme E2 11 (UBC11).